The sequence spans 387 residues: Probable tRNA sulfurtransferase (387 aa).

The THUMP domain maps to 67–167; that stretch reads SLLKNLFTRL…KEHFLIISES (101 aa). Residues 185 to 186, 210 to 211, Arg269, Gly287, and Gln296 contribute to the ATP site; these read LL and TF.

It belongs to the ThiI family.

Its subcellular location is the cytoplasm. The enzyme catalyses [ThiI sulfur-carrier protein]-S-sulfanyl-L-cysteine + a uridine in tRNA + 2 reduced [2Fe-2S]-[ferredoxin] + ATP + H(+) = [ThiI sulfur-carrier protein]-L-cysteine + a 4-thiouridine in tRNA + 2 oxidized [2Fe-2S]-[ferredoxin] + AMP + diphosphate. The catalysed reaction is [ThiS sulfur-carrier protein]-C-terminal Gly-Gly-AMP + S-sulfanyl-L-cysteinyl-[cysteine desulfurase] + AH2 = [ThiS sulfur-carrier protein]-C-terminal-Gly-aminoethanethioate + L-cysteinyl-[cysteine desulfurase] + A + AMP + 2 H(+). The protein operates within cofactor biosynthesis; thiamine diphosphate biosynthesis. In terms of biological role, catalyzes the ATP-dependent transfer of a sulfur to tRNA to produce 4-thiouridine in position 8 of tRNAs, which functions as a near-UV photosensor. Also catalyzes the transfer of sulfur to the sulfur carrier protein ThiS, forming ThiS-thiocarboxylate. This is a step in the synthesis of thiazole, in the thiamine biosynthesis pathway. The sulfur is donated as persulfide by IscS. This is Probable tRNA sulfurtransferase from Mycoplasma pneumoniae (strain ATCC 29342 / M129 / Subtype 1) (Mycoplasmoides pneumoniae).